A 357-amino-acid polypeptide reads, in one-letter code: Protein-glutamate methylesterase/protein-glutamine glutaminase 1 (357 aa).

Residues 10 to 127 enclose the Response regulatory domain; that stretch reads RTLIVDDSAF…DVNKIEKELV (118 aa). The residue at position 61 (aspartate 61) is a 4-aspartylphosphate. The 195-residue stretch at 159 to 353 folds into the CheB-type methylesterase domain; the sequence is SCAGDFAVLI…EEIVRMSEVK (195 aa). Catalysis depends on residues serine 171, histidine 198, and aspartate 295.

This sequence belongs to the CheB family. In terms of processing, phosphorylated by CheA. Phosphorylation of the N-terminal regulatory domain activates the methylesterase activity.

The protein resides in the cytoplasm. The enzyme catalyses [protein]-L-glutamate 5-O-methyl ester + H2O = L-glutamyl-[protein] + methanol + H(+). It carries out the reaction L-glutaminyl-[protein] + H2O = L-glutamyl-[protein] + NH4(+). Functionally, involved in chemotaxis. Part of a chemotaxis signal transduction system that modulates chemotaxis in response to various stimuli. Catalyzes the demethylation of specific methylglutamate residues introduced into the chemoreceptors (methyl-accepting chemotaxis proteins or MCP) by CheR. Also mediates the irreversible deamidation of specific glutamine residues to glutamic acid. This is Protein-glutamate methylesterase/protein-glutamine glutaminase 1 from Methanosarcina mazei (strain ATCC BAA-159 / DSM 3647 / Goe1 / Go1 / JCM 11833 / OCM 88) (Methanosarcina frisia).